The primary structure comprises 698 residues: Polyribonucleotide nucleotidyltransferase (698 aa).

Mg(2+) contacts are provided by D488 and D494. Residues 555–614 form the KH domain; it reads PRLLTIRIDPDKIRDVIGKGGATIRALTEETGTTIDISDDGKVTIASADKAAADEARRRI. Residues 624 to 692 enclose the S1 motif domain; sequence GTVYEGKVSK…RQGRIRLSMK (69 aa).

It belongs to the polyribonucleotide nucleotidyltransferase family. In terms of assembly, component of the RNA degradosome, which is a multiprotein complex involved in RNA processing and mRNA degradation. Mg(2+) serves as cofactor.

Its subcellular location is the cytoplasm. It catalyses the reaction RNA(n+1) + phosphate = RNA(n) + a ribonucleoside 5'-diphosphate. Involved in mRNA degradation. Catalyzes the phosphorolysis of single-stranded polyribonucleotides processively in the 3'- to 5'-direction. The protein is Polyribonucleotide nucleotidyltransferase of Alkalilimnicola ehrlichii (strain ATCC BAA-1101 / DSM 17681 / MLHE-1).